A 171-amino-acid polypeptide reads, in one-letter code: Small ribosomal subunit protein bS16 (171 aa).

The tract at residues 114 to 171 (EGGPTTEAAKPKKKAATSGAKKAAKAAEPEAAASEAAEPEAAAAPAEGGEQAESSAES) is disordered. A compositionally biased stretch (low complexity) spans 142–171 (PEAAASEAAEPEAAAAPAEGGEQAESSAES).

Belongs to the bacterial ribosomal protein bS16 family.

This Mycolicibacterium paratuberculosis (strain ATCC BAA-968 / K-10) (Mycobacterium paratuberculosis) protein is Small ribosomal subunit protein bS16.